A 92-amino-acid chain; its full sequence is Elongation factor 1-beta (92 aa).

This sequence belongs to the EF-1-beta/EF-1-delta family.

Functionally, promotes the exchange of GDP for GTP in EF-1-alpha/GDP, thus allowing the regeneration of EF-1-alpha/GTP that could then be used to form the ternary complex EF-1-alpha/GTP/AAtRNA. The chain is Elongation factor 1-beta from Pyrobaculum arsenaticum (strain DSM 13514 / JCM 11321 / PZ6).